A 92-amino-acid chain; its full sequence is Protein 10 (92 aa).

The EF-hand domain occupies 18 to 29 (FMQKYDKNSDQH).

It belongs to the calbindin family. Brain.

This Cavia porcellus (Guinea pig) protein is Protein 10.